We begin with the raw amino-acid sequence, 186 residues long: Elongation factor P (186 aa).

This sequence belongs to the elongation factor P family.

The protein resides in the cytoplasm. It functions in the pathway protein biosynthesis; polypeptide chain elongation. In terms of biological role, involved in peptide bond synthesis. Stimulates efficient translation and peptide-bond synthesis on native or reconstituted 70S ribosomes in vitro. Probably functions indirectly by altering the affinity of the ribosome for aminoacyl-tRNA, thus increasing their reactivity as acceptors for peptidyl transferase. This is Elongation factor P from Synechococcus sp. (strain CC9902).